The sequence spans 267 residues: Methylglyoxal reductase DkgB (267 aa).

Tyr-39 functions as the Proton donor in the catalytic mechanism. His-97 contacts substrate. An NADP(+)-binding site is contributed by Met-179–Asn-231.

It belongs to the aldo/keto reductase family. As to quaternary structure, monomer.

The protein resides in the cytoplasm. It carries out the reaction hydroxyacetone + NADP(+) = methylglyoxal + NADPH + H(+). Its function is as follows. Aldo-keto reductase that significantly contributes to cellular methylglyoxal detoxification by catalyzing the NADPH-dependent conversion of methylglyoxal to acetol. The polypeptide is Methylglyoxal reductase DkgB (Yersinia pestis).